The primary structure comprises 259 residues: Malonyl-[acyl-carrier protein] O-methyltransferase (259 aa).

Belongs to the methyltransferase superfamily.

It catalyses the reaction malonyl-[ACP] + S-adenosyl-L-methionine = malonyl-[ACP] methyl ester + S-adenosyl-L-homocysteine. Its pathway is cofactor biosynthesis; biotin biosynthesis. Converts the free carboxyl group of a malonyl-thioester to its methyl ester by transfer of a methyl group from S-adenosyl-L-methionine (SAM). It allows to synthesize pimeloyl-ACP via the fatty acid synthetic pathway. This Anoxybacillus flavithermus (strain DSM 21510 / WK1) protein is Malonyl-[acyl-carrier protein] O-methyltransferase.